The following is a 256-amino-acid chain: Probable hydroxyacylglutathione hydrolase glo2 (256 aa).

Zn(2+) is bound by residues His-63, His-65, Asp-67, His-68, His-118, and Asp-139. Substrate contacts are provided by residues Arg-148, 178–180 (HEY), and 250–253 (RDMK). Residue His-178 coordinates Zn(2+).

The protein belongs to the metallo-beta-lactamase superfamily. Glyoxalase II family. It depends on Zn(2+) as a cofactor.

The protein resides in the cytoplasm. It localises to the nucleus. It catalyses the reaction an S-(2-hydroxyacyl)glutathione + H2O = a 2-hydroxy carboxylate + glutathione + H(+). The enzyme catalyses (R)-S-lactoylglutathione + H2O = (R)-lactate + glutathione + H(+). Its pathway is secondary metabolite metabolism; methylglyoxal degradation; (R)-lactate from methylglyoxal: step 2/2. Its function is as follows. Thiolesterase that catalyzes the hydrolysis of S-D-lactoylglutathione to form glutathione and D-lactic acid. Involved in the metabolism of methylglyoxal, a toxic compound for yeast proliferation, by converting methylglyoxal to lactate via S-D-lactoylglutathione by sequential enzyme reactions catalyzed by glyoxalase I and glyoxalase II. This is Probable hydroxyacylglutathione hydrolase glo2 (glo2) from Schizosaccharomyces pombe (strain 972 / ATCC 24843) (Fission yeast).